Reading from the N-terminus, the 363-residue chain is Peptide chain release factor 1 (363 aa).

Gln237 bears the N5-methylglutamine mark.

This sequence belongs to the prokaryotic/mitochondrial release factor family. Methylated by PrmC. Methylation increases the termination efficiency of RF1.

Its subcellular location is the cytoplasm. In terms of biological role, peptide chain release factor 1 directs the termination of translation in response to the peptide chain termination codons UAG and UAA. The protein is Peptide chain release factor 1 (prfA) of Mycoplasma capricolum subsp. capricolum (strain California kid / ATCC 27343 / NCTC 10154).